Consider the following 863-residue polypeptide: Glycogen phosphorylase (863 aa).

Lys-618 carries the post-translational modification N6-(pyridoxal phosphate)lysine.

It belongs to the glycogen phosphorylase family. The cofactor is pyridoxal 5'-phosphate.

The enzyme catalyses [(1-&gt;4)-alpha-D-glucosyl](n) + phosphate = [(1-&gt;4)-alpha-D-glucosyl](n-1) + alpha-D-glucose 1-phosphate. Functionally, phosphorylase is an important allosteric enzyme in carbohydrate metabolism. Enzymes from different sources differ in their regulatory mechanisms and in their natural substrates. However, all known phosphorylases share catalytic and structural properties. The sequence is that of Glycogen phosphorylase (glgP) from Mycobacterium bovis (strain ATCC BAA-935 / AF2122/97).